A 101-amino-acid chain; its full sequence is NADH-quinone oxidoreductase subunit K (101 aa).

3 helical membrane-spanning segments follow: residues 4–24 (LGHLLALGAVLFCISLAGIFL), 30–50 (IVLLMSIELMLLAVNVNFIAF), and 62–82 (FVFFILTVAAAEAAIGLAILV).

Belongs to the complex I subunit 4L family. In terms of assembly, NDH-1 is composed of 14 different subunits. Subunits NuoA, H, J, K, L, M, N constitute the membrane sector of the complex.

The protein localises to the cell inner membrane. It catalyses the reaction a quinone + NADH + 5 H(+)(in) = a quinol + NAD(+) + 4 H(+)(out). Functionally, NDH-1 shuttles electrons from NADH, via FMN and iron-sulfur (Fe-S) centers, to quinones in the respiratory chain. The immediate electron acceptor for the enzyme in this species is believed to be ubiquinone. Couples the redox reaction to proton translocation (for every two electrons transferred, four hydrogen ions are translocated across the cytoplasmic membrane), and thus conserves the redox energy in a proton gradient. The chain is NADH-quinone oxidoreductase subunit K from Xylella fastidiosa (strain Temecula1 / ATCC 700964).